A 311-amino-acid polypeptide reads, in one-letter code: Aspartate carbamoyltransferase catalytic subunit (311 aa).

Arg-55 and Thr-56 together coordinate carbamoyl phosphate. Lys-85 contacts L-aspartate. Carbamoyl phosphate is bound by residues Arg-106, His-135, and Gln-138. L-aspartate is bound by residues Arg-168 and Arg-230. 2 residues coordinate carbamoyl phosphate: Leu-268 and Pro-269.

Belongs to the aspartate/ornithine carbamoyltransferase superfamily. ATCase family. In terms of assembly, heterododecamer (2C3:3R2) of six catalytic PyrB chains organized as two trimers (C3), and six regulatory PyrI chains organized as three dimers (R2).

It catalyses the reaction carbamoyl phosphate + L-aspartate = N-carbamoyl-L-aspartate + phosphate + H(+). It functions in the pathway pyrimidine metabolism; UMP biosynthesis via de novo pathway; (S)-dihydroorotate from bicarbonate: step 2/3. Functionally, catalyzes the condensation of carbamoyl phosphate and aspartate to form carbamoyl aspartate and inorganic phosphate, the committed step in the de novo pyrimidine nucleotide biosynthesis pathway. The chain is Aspartate carbamoyltransferase catalytic subunit from Escherichia coli O139:H28 (strain E24377A / ETEC).